The chain runs to 407 residues: GTPase Obg (407 aa).

The Obg domain maps to 1 to 159; the sequence is MKFVDEVSIR…RDLKLEMKVL (159 aa). Residues 128–148 form a disordered region; the sequence is TRFKSSTNRAPRQTTPGKPGE. The segment covering 129–143 has biased composition (polar residues); sequence RFKSSTNRAPRQTTP. An OBG-type G domain is found at 160–333; that stretch reads ADVGLLGLPN…LTRDIMRYLE (174 aa). Residues 166 to 173, 191 to 195, 213 to 216, 283 to 286, and 314 to 316 each bind GTP; these read GLPNAGKS, FTTLV, DIPG, NKCD, and SAI. Ser-173 and Thr-193 together coordinate Mg(2+). The interval 376 to 407 is disordered; sequence SGVKSVHDIGDDDWDEEDVDDEDGPEIIYVRD. A compositionally biased stretch (acidic residues) spans 385-400; the sequence is GDDDWDEEDVDDEDGP.

It belongs to the TRAFAC class OBG-HflX-like GTPase superfamily. OBG GTPase family. As to quaternary structure, monomer. The cofactor is Mg(2+).

It localises to the cytoplasm. Its function is as follows. An essential GTPase which binds GTP, GDP and possibly (p)ppGpp with moderate affinity, with high nucleotide exchange rates and a fairly low GTP hydrolysis rate. Plays a role in control of the cell cycle, stress response, ribosome biogenesis and in those bacteria that undergo differentiation, in morphogenesis control. This Pseudomonas fluorescens (strain Pf0-1) protein is GTPase Obg.